The sequence spans 903 residues: uncharacterized protein (903 aa).

This is an uncharacterized protein from Gallid herpesvirus 2 (strain Chicken/Md5/ATCC VR-987) (GaHV-2).